We begin with the raw amino-acid sequence, 24 residues long: FLPAVLRVAAKIVPTVFCAISKKC.

C18 and C24 are disulfide-bonded.

In terms of tissue distribution, expressed by the skin glands.

It is found in the secreted. Functionally, has antibacterial activity against the Gram-positive bacterium S.aureus ATCC 25923 (MIC=3 uM) and the Gram-negative bacterium E.coli ATCC 25726 (MIC=24 uM). The chain is Brevinin-1HSa from Odorrana hosii (Hose's rock frog).